Consider the following 170-residue polypeptide: MAVRFIREDGDEILRKVSKKVDVIDERIKTLLDDMAETMYAANGVGLAAPQVGVLKRVVVIDVGDGLMELINPEIVEQEGEQIDIEGCLSIPGVAGEVKRPARVVVEALNREGEKITVEGKELLAVALCHEIDHLDGILFTDKVIRFIDEDEMERRRENKRRNKIRQNKG.

The Fe cation site is built by cysteine 88 and histidine 130. The active site involves glutamate 131. Histidine 134 contributes to the Fe cation binding site.

The protein belongs to the polypeptide deformylase family. Fe(2+) is required as a cofactor.

The catalysed reaction is N-terminal N-formyl-L-methionyl-[peptide] + H2O = N-terminal L-methionyl-[peptide] + formate. Removes the formyl group from the N-terminal Met of newly synthesized proteins. Requires at least a dipeptide for an efficient rate of reaction. N-terminal L-methionine is a prerequisite for activity but the enzyme has broad specificity at other positions. The sequence is that of Peptide deformylase from Acetivibrio thermocellus (strain ATCC 27405 / DSM 1237 / JCM 9322 / NBRC 103400 / NCIMB 10682 / NRRL B-4536 / VPI 7372) (Clostridium thermocellum).